Reading from the N-terminus, the 266-residue chain is PTS system sorbose-specific EIIC component (266 aa).

In terms of domain architecture, PTS EIIC type-4 spans 1–237; it reads MEISTLQIIA…GGVGVIIALI (237 aa). A run of 7 helical transmembrane segments spans residues 3-23, 33-53, 79-99, 100-120, 151-171, 183-203, and 219-239; these read ISTL…MGSV, LIAC…VMLG, IISA…IAIA, LPVA…TVVF, VAIP…SSML, QIAG…MMGV, and YLDF…LIYI.

Its subcellular location is the cell inner membrane. In terms of biological role, the phosphoenolpyruvate-dependent sugar phosphotransferase system (PTS), a major carbohydrate active transport system, catalyzes the phosphorylation of incoming sugar substrates concomitant with their translocation across the cell membrane. The enzyme II SorABFM PTS system is involved in L-sorbose transport. This chain is PTS system sorbose-specific EIIC component, found in Klebsiella pneumoniae.